The following is a 513-amino-acid chain: Bone morphogenetic protein 6 (513 aa).

An N-terminal signal peptide occupies residues methionine 1 to serine 20. A propeptide spanning residues cysteine 21–arginine 374 is cleaved from the precursor. Disordered regions lie at residues alanine 38 to phenylalanine 66, leucine 89 to serine 131, and alanine 145 to leucine 200. Low complexity predominate over residues glycine 98 to arginine 121. A compositionally biased stretch (polar residues) spans glutamine 158 to arginine 172. 5 N-linked (GlcNAc...) asparagine glycosylation sites follow: asparagine 241, asparagine 269, asparagine 386, asparagine 404, and asparagine 454. A disordered region spans residues threonine 373 to serine 398. Disulfide bonds link cysteine 412–cysteine 478, cysteine 441–cysteine 510, and cysteine 445–cysteine 512.

The protein belongs to the TGF-beta family. Interacts with SOSTDC1. Interacts (when glycosylated) with type I receptor ACVR1; the interaction may induce HAMP expression. Interacts with type II receptor ACVR2B. Interacts with Hemojuvelin/HJV. Interacts with ERFE; the interaction inhibits BMP-induced transcription of HAMP. Interacts with BMPR1A/ALK3. Forms heterodimers with BMP2 in vitro; the heterodimer then binds to its receptor BMPR1A /ALK3 and may induce HAMP expression. Glycosylated at Asn-454. Glycosylation is crucial for recognition by the activin receptor type I/ACVR1.

The protein localises to the secreted. Growth factor of the TGF-beta superfamily that plays essential roles in many developmental processes including cartilage and bone formation. Also plays an important role in the regulation of HAMP/hepcidin expression and iron metabolism by acting as a ligand for hemojuvelin/HJV. Also acts to promote expression of HAMP, potentially via the interaction with its receptor BMPR1A/ALK3. Initiates the canonical BMP signaling cascade by associating with type I receptor ACVR1 and type II receptor ACVR2B. In turn, ACVR1 propagates signal by phosphorylating SMAD1/5/8 that travel to the nucleus and act as activators and repressors of transcription of target. Can also signal through non-canonical pathway such as TAZ-Hippo signaling cascade to modulate VEGF signaling by regulating VEGFR2 expression. The protein is Bone morphogenetic protein 6 (BMP6) of Homo sapiens (Human).